The primary structure comprises 209 residues: Large ribosomal subunit protein uL3 (209 aa).

Positions 118–152 (GFQGAIKRHGQSRGPMSHGSRYHRRPGSMGPVDPN) are disordered.

The protein belongs to the universal ribosomal protein uL3 family. In terms of assembly, part of the 50S ribosomal subunit. Forms a cluster with proteins L14 and L19.

Its function is as follows. One of the primary rRNA binding proteins, it binds directly near the 3'-end of the 23S rRNA, where it nucleates assembly of the 50S subunit. The sequence is that of Large ribosomal subunit protein uL3 from Bacillus licheniformis (strain ATCC 14580 / DSM 13 / JCM 2505 / CCUG 7422 / NBRC 12200 / NCIMB 9375 / NCTC 10341 / NRRL NRS-1264 / Gibson 46).